Reading from the N-terminus, the 476-residue chain is Bifunctional protein HldE (476 aa).

Residues 1–319 (MKVSLPAFEK…EALALHHGES (319 aa)) are ribokinase. ATP is bound at residue 195-198 (NMSE). Asp-264 is a catalytic residue. The segment at 345–476 (MTNGCFDILH…AIIQNIMANQ (132 aa)) is cytidylyltransferase.

It in the N-terminal section; belongs to the carbohydrate kinase PfkB family. This sequence in the C-terminal section; belongs to the cytidylyltransferase family. Homodimer.

The enzyme catalyses D-glycero-beta-D-manno-heptose 7-phosphate + ATP = D-glycero-beta-D-manno-heptose 1,7-bisphosphate + ADP + H(+). The catalysed reaction is D-glycero-beta-D-manno-heptose 1-phosphate + ATP + H(+) = ADP-D-glycero-beta-D-manno-heptose + diphosphate. It participates in nucleotide-sugar biosynthesis; ADP-L-glycero-beta-D-manno-heptose biosynthesis; ADP-L-glycero-beta-D-manno-heptose from D-glycero-beta-D-manno-heptose 7-phosphate: step 1/4. It functions in the pathway nucleotide-sugar biosynthesis; ADP-L-glycero-beta-D-manno-heptose biosynthesis; ADP-L-glycero-beta-D-manno-heptose from D-glycero-beta-D-manno-heptose 7-phosphate: step 3/4. Its function is as follows. Catalyzes the phosphorylation of D-glycero-D-manno-heptose 7-phosphate at the C-1 position to selectively form D-glycero-beta-D-manno-heptose-1,7-bisphosphate. In terms of biological role, catalyzes the ADP transfer from ATP to D-glycero-beta-D-manno-heptose 1-phosphate, yielding ADP-D-glycero-beta-D-manno-heptose. The protein is Bifunctional protein HldE of Shewanella baltica (strain OS185).